We begin with the raw amino-acid sequence, 361 residues long: MNLLTTKIDLDAIAHNTRVLKQMAGPAKLMAVVKANAYNHGVEKVAPVIAAHGADAFGVATLAEAMQLRDIGISQEVLCWIWTPEQDFRAAIDRNIDLAVISPAHAKALIDTDAEHIRVSIKIDSGLHRSGVDEQEWEGVFSALAAAPHIEVTGMFTHLACADEPENPETDRQIIAFRRALALARKHGLECPVNHVCNSPAFLTRSDLHMEMVRPGLAFYGLEPVAGREHGLKPAMTWEAKVSVVKQIEAGQGTSYGLTWRAEDRGFVAVVPAGYADGMPRHAQGKFSVTIDGVDYPQVGRVCMDQFVISLGDNPHGVEAGAKAVIFGENGHDATDFAERLDTINYEVVCRPTGRTVRAYV.

Catalysis depends on K34, which acts as the Proton acceptor; specific for D-alanine. Residue K34 is modified to N6-(pyridoxal phosphate)lysine. A substrate-binding site is contributed by R129. Y256 serves as the catalytic Proton acceptor; specific for L-alanine. Position 304 (M304) interacts with substrate.

It belongs to the alanine racemase family. Requires pyridoxal 5'-phosphate as cofactor.

It carries out the reaction L-alanine = D-alanine. The protein operates within amino-acid biosynthesis; D-alanine biosynthesis; D-alanine from L-alanine: step 1/1. Functionally, catalyzes the interconversion of L-alanine and D-alanine. May also act on other amino acids. The sequence is that of Alanine racemase (alr) from Corynebacterium glutamicum (strain R).